The primary structure comprises 471 residues: Probable flavin-containing monoamine oxidase B (471 aa).

Cys-406 is subject to S-8alpha-FAD cysteine.

The protein belongs to the flavin monoamine oxidase family. The cofactor is FAD.

The catalysed reaction is a secondary aliphatic amine + O2 + H2O = a primary amine + an aldehyde + H2O2. This is Probable flavin-containing monoamine oxidase B (maoB-1) from Dictyostelium discoideum (Social amoeba).